Reading from the N-terminus, the 141-residue chain is Large ribosomal subunit protein uL11 (141 aa).

It belongs to the universal ribosomal protein uL11 family. Part of the ribosomal stalk of the 50S ribosomal subunit. Interacts with L10 and the large rRNA to form the base of the stalk. L10 forms an elongated spine to which L12 dimers bind in a sequential fashion forming a multimeric L10(L12)X complex. In terms of processing, one or more lysine residues are methylated.

Forms part of the ribosomal stalk which helps the ribosome interact with GTP-bound translation factors. The sequence is that of Large ribosomal subunit protein uL11 from Chlamydia trachomatis serovar L2 (strain ATCC VR-902B / DSM 19102 / 434/Bu).